Consider the following 501-residue polypeptide: Glycerol kinase (501 aa).

ADP is bound at residue threonine 17. The ATP site is built by threonine 17, threonine 18, and serine 19. Sn-glycerol 3-phosphate is bound at residue threonine 17. Arginine 21 serves as a coordination point for ADP. Positions 87, 88, 139, and 243 each coordinate sn-glycerol 3-phosphate. Arginine 87, glutamate 88, tyrosine 139, aspartate 243, and glutamine 244 together coordinate glycerol. Threonine 265 and glycine 308 together coordinate ADP. ATP is bound by residues threonine 265, glycine 308, glutamine 312, and glycine 409. 2 residues coordinate ADP: glycine 409 and asparagine 413.

Belongs to the FGGY kinase family.

The enzyme catalyses glycerol + ATP = sn-glycerol 3-phosphate + ADP + H(+). It functions in the pathway polyol metabolism; glycerol degradation via glycerol kinase pathway; sn-glycerol 3-phosphate from glycerol: step 1/1. Inhibited by fructose 1,6-bisphosphate (FBP). In terms of biological role, key enzyme in the regulation of glycerol uptake and metabolism. Catalyzes the phosphorylation of glycerol to yield sn-glycerol 3-phosphate. In Pseudomonas savastanoi pv. phaseolicola (strain 1448A / Race 6) (Pseudomonas syringae pv. phaseolicola (strain 1448A / Race 6)), this protein is Glycerol kinase.